Here is a 490-residue protein sequence, read N- to C-terminus: Monocarboxylate transporter 3 (490 aa).

Over 1-14 (MGAGGPRRGAGPPD) the chain is Cytoplasmic. Residues 15 to 35 (GGWGWVVLGACFVITGFAYGF) form a helical membrane-spanning segment. The Extracellular portion of the chain corresponds to 36–58 (PKAVSVFFRELKRDFGAGYSDTA). A helical membrane pass occupies residues 59–79 (WVSSIMLAMLYGTGPLSSILV). Residues 80-85 (TRFGCR) are Cytoplasmic-facing. Residues 86 to 106 (PVMLAGGLLASAGMILASFAS) traverse the membrane as a helical segment. Residues 107 to 115 (RLLELYLTA) are Extracellular-facing. A helical membrane pass occupies residues 116–136 (GVLTGLGLALNFQPSLIMLGL). Residues 137–147 (YFERRRPLANG) are Cytoplasmic-facing. The chain crosses the membrane as a helical span at residues 148–168 (LAAAGSPVFLSTLSPLGQLLG). Residues 169–172 (ERFG) lie on the Extracellular side of the membrane. A helical membrane pass occupies residues 173 to 193 (WRGGFLLFGGLLLHCCACGAV). Over 194-230 (MRPPPGPQPRPDPAPPGGRARHRQLLDLAVCTDRTFM) the chain is Cytoplasmic. A helical transmembrane segment spans residues 231–251 (VYMVTKFLMALGLFVPAILLV). The Extracellular portion of the chain corresponds to 252 to 257 (NYAKDA). The helical transmembrane segment at 258–278 (GVPDAEAAFLLSIVGFVDIVA) threads the bilayer. The Cytoplasmic segment spans residues 279–293 (RPACGALAGLGRLRP). A helical membrane pass occupies residues 294-314 (HVPYLFSLALLANGLTDLISA). The Extracellular segment spans residues 315 to 318 (RARS). A helical transmembrane segment spans residues 319–339 (YGTLVAFCIAFGLSYGMVGAL). Residues 340 to 352 (QFEVLMATVGAPR) lie on the Cytoplasmic side of the membrane. The helical transmembrane segment at 353–373 (FPSALGLVLLVEAVAVLIGPP) threads the bilayer. Residues 374 to 386 (SAGRLVDALKNYE) lie on the Extracellular side of the membrane. A helical transmembrane segment spans residues 387 to 407 (IIFYLAGSEVVLAGVFMAVTT). The Cytoplasmic segment spans residues 408 to 490 (YCCQRCSKDI…GGHEAHGQNA (83 aa)). Residues 419–490 (PGPSAEGGTS…GGHEAHGQNA (72 aa)) are disordered. 2 basolateral sorting signal regions span residues 426 to 460 (GTSDTEDVEAERDSEPMPASTEEPGSLEALEVLSP) and 461 to 480 (RAGSPEPEEEAVPDLSHESV). Over residues 475–490 (LSHESVGGHEAHGQNA) the composition is skewed to basic and acidic residues.

Belongs to the major facilitator superfamily. Monocarboxylate porter (TC 2.A.1.13) family. In terms of tissue distribution, retinal pigment epithelium.

The protein localises to the basolateral cell membrane. It catalyses the reaction (S)-lactate(in) + H(+)(in) = (S)-lactate(out) + H(+)(out). In terms of biological role, probable retinal pigment epithelium (RPE)-specific proton-coupled L-lactate transporter. May facilitate transport of lactate and H(+) out of the retina and could therefore play a role in pH and ion homeostasis of the outer retina. This Rattus norvegicus (Rat) protein is Monocarboxylate transporter 3 (Slc16a8).